A 181-amino-acid polypeptide reads, in one-letter code: Shikimate kinase 2 (181 aa).

ATP is bound at residue 12–17 (GCGKTT). Residues Thr-16 and Asp-32 each contribute to the Mg(2+) site. Substrate-binding residues include Asp-34, Arg-58, and Gly-79. Residues 112–126 (EAEPEVGLRPTLTGK) form an LID domain region. Residue Arg-120 participates in ATP binding. Arg-139 is a binding site for substrate.

This sequence belongs to the shikimate kinase family. AroL subfamily. As to quaternary structure, monomer. Mg(2+) is required as a cofactor.

It localises to the cytoplasm. The catalysed reaction is shikimate + ATP = 3-phosphoshikimate + ADP + H(+). Its pathway is metabolic intermediate biosynthesis; chorismate biosynthesis; chorismate from D-erythrose 4-phosphate and phosphoenolpyruvate: step 5/7. In terms of biological role, catalyzes the specific phosphorylation of the 3-hydroxyl group of shikimic acid using ATP as a cosubstrate. The sequence is that of Shikimate kinase 2 from Escherichia fergusonii (strain ATCC 35469 / DSM 13698 / CCUG 18766 / IAM 14443 / JCM 21226 / LMG 7866 / NBRC 102419 / NCTC 12128 / CDC 0568-73).